Here is a 420-residue protein sequence, read N- to C-terminus: Glucose-1-phosphate adenylyltransferase (420 aa).

Alpha-D-glucose 1-phosphate-binding positions include Y107, G172, 187 to 188, and S205; that span reads EK.

It belongs to the bacterial/plant glucose-1-phosphate adenylyltransferase family. As to quaternary structure, homotetramer.

The enzyme catalyses alpha-D-glucose 1-phosphate + ATP + H(+) = ADP-alpha-D-glucose + diphosphate. Its pathway is glycan biosynthesis; glycogen biosynthesis. Functionally, involved in the biosynthesis of ADP-glucose, a building block required for the elongation reactions to produce glycogen. Catalyzes the reaction between ATP and alpha-D-glucose 1-phosphate (G1P) to produce pyrophosphate and ADP-Glc. The chain is Glucose-1-phosphate adenylyltransferase from Rhodopseudomonas palustris (strain HaA2).